Consider the following 867-residue polypeptide: Leucine--tRNA ligase (867 aa).

The 'HIGH' region signature appears at 43-53 (PYPSGRLHMGH). The 'KMSKS' region signature appears at 627-631 (KMSKS). K630 is a binding site for ATP.

It belongs to the class-I aminoacyl-tRNA synthetase family.

It localises to the cytoplasm. It catalyses the reaction tRNA(Leu) + L-leucine + ATP = L-leucyl-tRNA(Leu) + AMP + diphosphate. This is Leucine--tRNA ligase from Phenylobacterium zucineum (strain HLK1).